Reading from the N-terminus, the 125-residue chain is Putative RNA polymerase sigma-G factor (125 aa).

The protein belongs to the sigma-70 factor family.

Its function is as follows. Sigma factors are initiation factors that promote the attachment of RNA polymerase to specific initiation sites and are then released. The sequence is that of Putative RNA polymerase sigma-G factor from Bacillus thuringiensis subsp. kurstaki.